Reading from the N-terminus, the 219-residue chain is Large ribosomal subunit protein uL3 (219 aa).

Positions 133–145 are enriched in polar residues; the sequence is GRASHGNSRSHNV. The segment at 133-153 is disordered; that stretch reads GRASHGNSRSHNVPGSIGMAQ. At Q153 the chain carries N5-methylglutamine.

The protein belongs to the universal ribosomal protein uL3 family. Part of the 50S ribosomal subunit. Forms a cluster with proteins L14 and L19. Post-translationally, methylated by PrmB.

In terms of biological role, one of the primary rRNA binding proteins, it binds directly near the 3'-end of the 23S rRNA, where it nucleates assembly of the 50S subunit. In Paraburkholderia phymatum (strain DSM 17167 / CIP 108236 / LMG 21445 / STM815) (Burkholderia phymatum), this protein is Large ribosomal subunit protein uL3.